The following is a 169-amino-acid chain: MAQGDDNKQAIGQIIRQEQALIFPSLDENDAFSLGQRIRDIAVKDKLGIAIDISLWDRRLFFAATAGATADNTEWLRRKFNVVRRFHVSTYRLVLEQNREDRMFAPYKALDVADYALAGGGFPIRVSGAGVIGAVIVSGLPQREDHNLVVRAVAEHVGQDPVALALPAA.

It belongs to the UPF0303 family.

The polypeptide is UPF0303 protein BruAb1_1406 (Brucella abortus biovar 1 (strain 9-941)).